A 689-amino-acid chain; its full sequence is Glycine--tRNA ligase beta subunit (689 aa).

The protein belongs to the class-II aminoacyl-tRNA synthetase family. As to quaternary structure, tetramer of two alpha and two beta subunits.

Its subcellular location is the cytoplasm. It catalyses the reaction tRNA(Gly) + glycine + ATP = glycyl-tRNA(Gly) + AMP + diphosphate. In Aeromonas hydrophila subsp. hydrophila (strain ATCC 7966 / DSM 30187 / BCRC 13018 / CCUG 14551 / JCM 1027 / KCTC 2358 / NCIMB 9240 / NCTC 8049), this protein is Glycine--tRNA ligase beta subunit.